The following is a 401-amino-acid chain: Deubiquitinase and deneddylase Dub1 (401 aa).

The span at 1 to 11 (MLSPTNSTSKT) shows a compositional bias: polar residues. The tract at residues 1-24 (MLSPTNSTSKTAPVPPRDSSKPVL) is disordered. A helical transmembrane segment spans residues 40–60 (TALAVLLVVVTLGLILLFYSF). The tract at residues 77–130 (KEQPTISIPVPLPSPPLAVPRPSTPPPPVISRPSTPSAPKPSTPPPLLPKAPKP) is disordered. Positions 86–128 (VPLPSPPLAVPRPSTPPPPVISRPSTPSAPKPSTPPPLLPKAP) are enriched in pro residues. Residues H275, D292, and C345 contribute to the active site.

Belongs to the peptidase C48 family. As to quaternary structure, binds to host NFKBIA.

It is found in the secreted. It localises to the host cell. Its subcellular location is the membrane. Functionally, effector proteins function to alter host cell physiology and promote bacterial survival in host tissues. This protease possesses deubiquitinating and deneddylating activities. Impairs ubiquitination and degradation of NF-kappa-B inhibitor alpha (NFKBIA), thereby preventing NF-kappa-B activation. This chain is Deubiquitinase and deneddylase Dub1 (cdu1), found in Chlamydia trachomatis serovar L2 (strain ATCC VR-902B / DSM 19102 / 434/Bu).